A 335-amino-acid chain; its full sequence is GTPase Obg (335 aa).

An Obg domain is found at 1–158; sequence MFVDQITLEL…RQVELELKLI (158 aa). Residues 126-145 form a disordered region; that stretch reads NTFFKTSVNRAPTKATPGKP. In terms of domain architecture, OBG-type G spans 159–334; sequence ADIGLVGFPN…LYRFFTQRLA (176 aa). GTP is bound by residues 165–172, 190–194, 215–218, 285–288, and 315–317; these read GFPNAGKS, FTTLA, DIPG, NKID, and SGL. Positions 172 and 192 each coordinate Mg(2+).

It belongs to the TRAFAC class OBG-HflX-like GTPase superfamily. OBG GTPase family. Monomer. Mg(2+) serves as cofactor.

The protein resides in the cytoplasm. Functionally, an essential GTPase which binds GTP, GDP and possibly (p)ppGpp with moderate affinity, with high nucleotide exchange rates and a fairly low GTP hydrolysis rate. Plays a role in control of the cell cycle, stress response, ribosome biogenesis and in those bacteria that undergo differentiation, in morphogenesis control. This Chlamydia pneumoniae (Chlamydophila pneumoniae) protein is GTPase Obg.